We begin with the raw amino-acid sequence, 127 residues long: MPRIEGVDVPDDKRGEIALTDIYGVGQSRASEILEKAEVSVDKRPREWTESETKRVRRIIEEDYTVEGQLRTEVQMNIKRLKEIGCYRGKRHREGLPVNGQRTRTNARTRKGKRKTVAGRSQSTQKK.

Residues 90 to 127 (KRHREGLPVNGQRTRTNARTRKGKRKTVAGRSQSTQKK) are disordered. Basic residues predominate over residues 105–117 (TNARTRKGKRKTV).

The protein belongs to the universal ribosomal protein uS13 family. In terms of assembly, part of the 30S ribosomal subunit. Forms a loose heterodimer with protein S19. Forms two bridges to the 50S subunit in the 70S ribosome.

Functionally, located at the top of the head of the 30S subunit, it contacts several helices of the 16S rRNA. In the 70S ribosome it contacts the 23S rRNA (bridge B1a) and protein L5 of the 50S subunit (bridge B1b), connecting the 2 subunits; these bridges are implicated in subunit movement. Contacts the tRNAs in the A and P-sites. This Salinibacter ruber (strain DSM 13855 / M31) protein is Small ribosomal subunit protein uS13.